Here is a 238-residue protein sequence, read N- to C-terminus: Ribonuclease M (238 aa).

Disulfide bonds link C5–C22, C13–C58, C21–C126, C66–C118, and C191–C225. Residue H51 is part of the active site. N74 is a glycosylation site (N-linked (GlcNAc...) asparagine). Active-site residues include E111 and H115.

The protein belongs to the RNase T2 family.

It catalyses the reaction a ribonucleotidyl-ribonucleotide-RNA + H2O = a 3'-end 3'-phospho-ribonucleotide-RNA + a 5'-end dephospho-ribonucleoside-RNA + H(+). Functionally, this is a base non-specific and adenylic acid preferential ribonuclease. In Aspergillus phoenicis (Aspergillus saitoi), this protein is Ribonuclease M.